The following is a 353-amino-acid chain: Immune-associated nucleotide-binding protein 8 (353 aa).

Polar residues predominate over residues M1–S10. Residues M1–E43 form a disordered region. The segment covering P12–F34 has biased composition (basic and acidic residues). Residues H40 to K248 form the AIG1-type G domain. Positions G49–S56 are G1. GTP is bound by residues G49–A57 and S70. The tract at residues G76–E80 is G2. Positions D98–G101 are G3. The G4 stretch occupies residues T168–D171. The segment at D207–K209 is G5. N208 serves as a coordination point for GTP. Positions Y244 to E291 form a coiled coil.

It belongs to the TRAFAC class TrmE-Era-EngA-EngB-Septin-like GTPase superfamily. AIG1/Toc34/Toc159-like paraseptin GTPase family. IAN subfamily. As to expression, mainly expressed in leaves.

The polypeptide is Immune-associated nucleotide-binding protein 8 (Arabidopsis thaliana (Mouse-ear cress)).